The following is a 177-amino-acid chain: Large ribosomal subunit protein uL6 (177 aa).

The protein belongs to the universal ribosomal protein uL6 family. As to quaternary structure, part of the 50S ribosomal subunit.

Its function is as follows. This protein binds to the 23S rRNA, and is important in its secondary structure. It is located near the subunit interface in the base of the L7/L12 stalk, and near the tRNA binding site of the peptidyltransferase center. This Zymomonas mobilis subsp. mobilis (strain ATCC 31821 / ZM4 / CP4) protein is Large ribosomal subunit protein uL6.